The chain runs to 579 residues: ATP-dependent lipid A-core flippase (579 aa).

The next 5 helical transmembrane spans lie at Phe-24–Leu-44, Trp-63–Thr-83, Val-150–Ala-170, Val-251–Ala-271, and Thr-275–Leu-295. Residues Ala-25–Arg-307 form the ABC transmembrane type-1 domain. One can recognise an ABC transporter domain in the interval Leu-339–Leu-575. Gly-373–Thr-380 contributes to the ATP binding site.

This sequence belongs to the ABC transporter superfamily. Lipid exporter (TC 3.A.1.106) family. As to quaternary structure, homodimer.

The protein localises to the cell inner membrane. It catalyses the reaction ATP + H2O + lipid A-core oligosaccharideSide 1 = ADP + phosphate + lipid A-core oligosaccharideSide 2.. Functionally, involved in lipopolysaccharide (LPS) biosynthesis. Translocates lipid A-core from the inner to the outer leaflet of the inner membrane. Transmembrane domains (TMD) form a pore in the inner membrane and the ATP-binding domain (NBD) is responsible for energy generation. The polypeptide is ATP-dependent lipid A-core flippase (Thiobacillus denitrificans (strain ATCC 25259 / T1)).